We begin with the raw amino-acid sequence, 205 residues long: Small ribosomal subunit protein uS4 (205 aa).

The segment covering 1–12 (MSKRVQAKHKLD) has biased composition (basic residues). Positions 1-49 (MSKRVQAKHKLDRRMGQNIWGRPKSPVNRREYGPGQHGQRRKGKMSDFG) are disordered. The 62-residue stretch at 94 to 155 (RRLDAVVYRS…ASRQLEIVVV (62 aa)) folds into the S4 RNA-binding domain.

The protein belongs to the universal ribosomal protein uS4 family. Part of the 30S ribosomal subunit. Contacts protein S5. The interaction surface between S4 and S5 is involved in control of translational fidelity.

One of the primary rRNA binding proteins, it binds directly to 16S rRNA where it nucleates assembly of the body of the 30S subunit. Functionally, with S5 and S12 plays an important role in translational accuracy. This Methylorubrum extorquens (strain CM4 / NCIMB 13688) (Methylobacterium extorquens) protein is Small ribosomal subunit protein uS4.